A 176-amino-acid polypeptide reads, in one-letter code: ATP-dependent protease subunit HslV (176 aa).

Residue T2 is part of the active site. Residues A157, C160, and T163 each coordinate Na(+).

The protein belongs to the peptidase T1B family. HslV subfamily. A double ring-shaped homohexamer of HslV is capped on each side by a ring-shaped HslU homohexamer. The assembly of the HslU/HslV complex is dependent on binding of ATP.

The protein resides in the cytoplasm. The enzyme catalyses ATP-dependent cleavage of peptide bonds with broad specificity.. With respect to regulation, allosterically activated by HslU binding. Its function is as follows. Protease subunit of a proteasome-like degradation complex believed to be a general protein degrading machinery. The protein is ATP-dependent protease subunit HslV of Buchnera aphidicola subsp. Acyrthosiphon pisum (strain APS) (Acyrthosiphon pisum symbiotic bacterium).